Reading from the N-terminus, the 1110-residue chain is RNA2 polyprotein (1110 aa).

It belongs to the nepoviruses RNA2 polyprotein family. Post-translationally, specific enzymatic cleavages in vivo by the P1 encoded 3C-like protease yield mature proteins.

The protein resides in the host cell junction. It localises to the host plasmodesma. The protein localises to the host cytoplasm. Its subcellular location is the host nucleus. It is found in the virion. Its function is as follows. Implicated in RNA2 replication. Could also be required for nematode transmission of the virus. In terms of biological role, transports viral genome to neighboring plant cells directly through plasmosdesmata, without any budding. The movement protein allows efficient cell to cell propagation, by bypassing the host cell wall barrier. Acts by forming a tubular structure at the host plasmodesmata, enlarging it enough to allow free passage of virion capsids. This is RNA2 polyprotein from Vitis vinifera (Grape).